The following is a 638-amino-acid chain: MILFKQATYFISLFATVSCGCLTQLYENAFFRGGDVASMYTPNAQYCQMRCTFHPRCLLFSFLPASSINDMEKRFGCFLKDSVTGTLPKVHRTGAVSGHSLKQCGHQISACHRDIYKGVDMRGVNFNVSKVSSVEECQKRCTSNIRCQFFSYATQTFHKAEYRNNCLLKYSPGGTPTAIKVLSNVESGFSLKPCALSEIGCHMNIFQHLAFSDVDVARVLTPDAFVCRTICTYHPNCLFFTFYTNVWKIESQRNVCLLKTSESGTPSSSTPQENTISGYSLLTCKRTLPEPCHSKIYPGVDFGGEELNVTFVKGVNVCQETCTKMIRCQFFTYSLLPEDCKEEKCKCFLRLSMDGSPTRIAYGTQGSSGYSLRLCNTGDNSVCTTKTSTRIVGGTNSSWGEWPWQVSLQVKLTAQRHLCGGSLIGHQWVLTAAHCFDGLPLQDVWRIYSGILNLSDITKDTPFSQIKEIIIHQNYKVSEGNHDIALIKLQAPLNYTEFQKPICLPSKGDTSTIYTNCWVTGWGFSKEKGEIQNILQKVNIPLVTNEECQKRYQDYKITQRMVCAGYKEGGKDACKGDSGGPLVCKHNGMWRLVGITSWGEGCARREQPGVYTKVAEYMDWILEKTQSSDGKAQMQSPA.

The N-terminal stretch at 1-19 (MILFKQATYFISLFATVSC) is a signal peptide. 4 Apple domains span residues 21 to 104 (CLTQ…LKQC), 111 to 194 (CHRD…LKPC), 201 to 284 (CHMN…LLTC), and 292 to 375 (CHSK…LRLC). Disulfide bonds link C21–C104, C47–C77, C51–C57, C111–C194, C137–C166, C141–C147, C201–C284, C227–C256, C231–C237, C292–C375, C318–C347, C322–C328, C340–C345, C383–C503, C419–C435, C517–C584, C548–C563, and C574–C602. An N-linked (GlcNAc...) asparagine glycan is attached at N127. The N-linked (GlcNAc...) asparagine glycan is linked to N308. Positions 391–626 (IVGGTNSSWG…YMDWILEKTQ (236 aa)) constitute a Peptidase S1 domain. N-linked (GlcNAc...) asparagine glycosylation is present at N396. H434 functions as the Charge relay system in the catalytic mechanism. A glycan (N-linked (GlcNAc...) asparagine) is linked at N453. D483 functions as the Charge relay system in the catalytic mechanism. N494 carries an N-linked (GlcNAc...) asparagine glycan. Residue S578 is the Charge relay system of the active site.

It belongs to the peptidase S1 family. Plasma kallikrein subfamily. Forms a heterodimer with SERPINA5. The zymogen is activated by factor XIIa, which cleaves the molecule into a light chain, which contains the active site, and a heavy chain, which associates with HMW kininogen. These chains are linked by one or more disulfide bonds. Interacts with iripin-3, a serine protease inhibitor from Ixodes ricinus saliva. Interacts with iripin-1, a serine protease inhibitor from Ixodes ricinus saliva. As to expression, found in plasma (at protein level).

It is found in the secreted. It carries out the reaction Cleaves selectively Arg-|-Xaa and Lys-|-Xaa bonds, including Lys-|-Arg and Arg-|-Ser bonds in (human) kininogen to release bradykinin.. Inhibited by SERPINA5. Participates in the surface-dependent activation of blood coagulation. Activates, in a reciprocal reaction, coagulation factor XII/F12 after binding to negatively charged surfaces. Releases bradykinin from HMW kininogen and may also play a role in the renin-angiotensin system by converting prorenin into renin. The chain is Plasma kallikrein (KLKB1) from Homo sapiens (Human).